Here is an 88-residue protein sequence, read N- to C-terminus: HssA/B-like protein 9 (88 aa).

Polar residues predominate over residues 1-14 (MSILSALTSISNPM). The tract at residues 1–26 (MSILSALTSISNPMKSSKSSVANGGG) is disordered.

It belongs to the hssA/B family.

This is HssA/B-like protein 9 (hssl9) from Dictyostelium discoideum (Social amoeba).